A 111-amino-acid polypeptide reads, in one-letter code: MKRNGETKRRRNVAEEAEQGEDPAMWENLDRNFRQVQSVLDRNRSLIQQVNDNHQSRMADNMSKNVALIQELNGNISKVVNMYSDLNTSFSSGFHGGKNGHDGGGAAGTRA.

Residues 1–26 (MKRNGETKRRRNVAEEAEQGEDPAMW) form a disordered region. Residue Ser-45 is modified to Phosphoserine. The disordered stretch occupies residues 90-111 (FSSGFHGGKNGHDGGGAAGTRA). The segment covering 94–111 (FHGGKNGHDGGGAAGTRA) has biased composition (gly residues).

This sequence belongs to the EARLY FLOWERING 4 family. As to quaternary structure, homodimer. Interacts with ELF3.

The protein localises to the nucleus. Component of the central CCA1/LHY-TOC1 feedback loop in the circadian clock that promotes clock accuracy and is required for sustained rhythms in the absence of daily light/dark cycles. Part of a corepressor complex consisting of ELF4, ELF3, and LUX involved in the transcriptional regulation of APRR9. Increases ELF3 nuclear distribution and localization in nuclear bodies. Required for responsiveness to continuous red, by regulating phytochrome B (phyB) signaling (including during seedling de-etiolation) and gene expression. Mediates both entrainment to an environmental cycle and circadian rhythm sustainability under constant conditions. Controls flowering time. Necessary for light-induced expression of both CCA1 and LHY. This Arabidopsis thaliana (Mouse-ear cress) protein is Protein EARLY FLOWERING 4 (ELF4).